The chain runs to 487 residues: Acetyl-coenzyme A carboxylase carboxyl transferase subunit beta, chloroplastic (487 aa).

The CoA carboxyltransferase N-terminal domain occupies 223–487; it reads LWVQCENCYG…LHAFFPLNQN (265 aa). C227, C230, C246, and C249 together coordinate Zn(2+). The segment at 227 to 249 adopts a C4-type zinc-finger fold; that stretch reads CENCYGLNYKKSFKSKMNLCEQC.

The protein belongs to the AccD/PCCB family. As to quaternary structure, acetyl-CoA carboxylase is a heterohexamer composed of biotin carboxyl carrier protein, biotin carboxylase and 2 subunits each of ACCase subunit alpha and ACCase plastid-coded subunit beta (accD). The cofactor is Zn(2+).

Its subcellular location is the plastid. The protein resides in the chloroplast stroma. It carries out the reaction N(6)-carboxybiotinyl-L-lysyl-[protein] + acetyl-CoA = N(6)-biotinyl-L-lysyl-[protein] + malonyl-CoA. The protein operates within lipid metabolism; malonyl-CoA biosynthesis; malonyl-CoA from acetyl-CoA: step 1/1. Its function is as follows. Component of the acetyl coenzyme A carboxylase (ACC) complex. Biotin carboxylase (BC) catalyzes the carboxylation of biotin on its carrier protein (BCCP) and then the CO(2) group is transferred by the transcarboxylase to acetyl-CoA to form malonyl-CoA. The chain is Acetyl-coenzyme A carboxylase carboxyl transferase subunit beta, chloroplastic from Panax ginseng (Korean ginseng).